The primary structure comprises 278 residues: Myb/SANT-like DNA-binding domain-containing protein 1 (278 aa).

The tract at residues 1–27 is disordered; the sequence is MVRGAGPGPSLSALSHPTGASGMAAAE. Positions 44–129 constitute a Myb-like domain; it reads RNWTDAEMRG…PDWPYYLAID (86 aa). Residues 138 to 168 are disordered; it reads SCDGKLPDSQPPGPSTSQTEASLSPPAKSTP.

The sequence is that of Myb/SANT-like DNA-binding domain-containing protein 1 (MSANTD1) from Homo sapiens (Human).